A 236-amino-acid chain; its full sequence is Leucyl/phenylalanyl-tRNA--protein transferase (236 aa).

The protein belongs to the L/F-transferase family.

It localises to the cytoplasm. It carries out the reaction N-terminal L-lysyl-[protein] + L-leucyl-tRNA(Leu) = N-terminal L-leucyl-L-lysyl-[protein] + tRNA(Leu) + H(+). The catalysed reaction is N-terminal L-arginyl-[protein] + L-leucyl-tRNA(Leu) = N-terminal L-leucyl-L-arginyl-[protein] + tRNA(Leu) + H(+). It catalyses the reaction L-phenylalanyl-tRNA(Phe) + an N-terminal L-alpha-aminoacyl-[protein] = an N-terminal L-phenylalanyl-L-alpha-aminoacyl-[protein] + tRNA(Phe). In terms of biological role, functions in the N-end rule pathway of protein degradation where it conjugates Leu, Phe and, less efficiently, Met from aminoacyl-tRNAs to the N-termini of proteins containing an N-terminal arginine or lysine. This Shewanella loihica (strain ATCC BAA-1088 / PV-4) protein is Leucyl/phenylalanyl-tRNA--protein transferase.